A 154-amino-acid polypeptide reads, in one-letter code: Large ribosomal subunit protein uL13 (154 aa).

This sequence belongs to the universal ribosomal protein uL13 family. In terms of assembly, part of the 50S ribosomal subunit.

This protein is one of the early assembly proteins of the 50S ribosomal subunit, although it is not seen to bind rRNA by itself. It is important during the early stages of 50S assembly. This is Large ribosomal subunit protein uL13 from Brucella abortus (strain S19).